The primary structure comprises 176 residues: dCTP deaminase (176 aa).

DCTP contacts are provided by residues 99–104 and aspartate 115; that span reads RSTLAR. Glutamate 125 (proton donor/acceptor) is an active-site residue. Residue glutamine 163 coordinates dCTP.

The protein belongs to the dCTP deaminase family. As to quaternary structure, homotrimer.

The enzyme catalyses dCTP + H2O + H(+) = dUTP + NH4(+). It functions in the pathway pyrimidine metabolism; dUMP biosynthesis; dUMP from dCTP (dUTP route): step 1/2. In terms of biological role, catalyzes the deamination of dCTP to dUTP. The chain is dCTP deaminase from Pyrobaculum neutrophilum (strain DSM 2338 / JCM 9278 / NBRC 100436 / V24Sta) (Thermoproteus neutrophilus).